A 172-amino-acid chain; its full sequence is UPF0254 protein Mlab_1743 (172 aa).

The protein belongs to the UPF0254 family.

The chain is UPF0254 protein Mlab_1743 from Methanocorpusculum labreanum (strain ATCC 43576 / DSM 4855 / Z).